Here is a 266-residue protein sequence, read N- to C-terminus: Transcription regulator FGM4 (266 aa).

A disordered region spans residues 17–36 (KTQNRLAKRKSRIHAGKQQG). Residues 18–31 (TQNRLAKRKSRIHA) are compositionally biased toward basic residues. ANK repeat units lie at residues 183-212 (KPGS…NVNE) and 216-245 (AGYS…DWSY).

The protein localises to the nucleus. Functionally, transcription regulator; part of the Fg3_54/C64 gene cluster that mediates the biosynthesis of the octapeptide fusaoctaxin A, a virulence factor that is required for cell-to-cell invasiveness of plant host. Positively regulates the expression the Fg3_54/C64 gene cluster. In Gibberella zeae (strain ATCC MYA-4620 / CBS 123657 / FGSC 9075 / NRRL 31084 / PH-1) (Wheat head blight fungus), this protein is Transcription regulator FGM4.